The following is a 284-amino-acid chain: Tropomyosin alpha-1 chain (284 aa).

Positions 1–38 (MDAIKKKMQMLKLDKENALDRAEQAEADKKGAEDKSKQ) are disordered. Residues 1–284 (MDAIKKKMQM…DHALNDMTSI (284 aa)) are a coiled coil. Residues 12-38 (KLDKENALDRAEQAEADKKGAEDKSKQ) show a composition bias toward basic and acidic residues.

It belongs to the tropomyosin family. In terms of assembly, homodimer. Heterodimer of an alpha (TPM1, TPM3 or TPM4) and a beta (TPM2) chain.

It is found in the cytoplasm. The protein resides in the cytoskeleton. Its function is as follows. Binds to actin filaments in muscle and non-muscle cells. Plays a central role, in association with the troponin complex, in the calcium dependent regulation of vertebrate striated muscle contraction. Smooth muscle contraction is regulated by interaction with caldesmon. In non-muscle cells is implicated in stabilizing cytoskeleton actin filaments. The chain is Tropomyosin alpha-1 chain (tpm1) from Xenopus laevis (African clawed frog).